Consider the following 337-residue polypeptide: 25S rRNA (adenine(2142)-N(1))-methyltransferase (337 aa).

Residues G180 and D201 each coordinate S-adenosyl-L-methionine.

This sequence belongs to the BMT2 family.

The protein localises to the nucleus. The protein resides in the nucleolus. It catalyses the reaction adenosine(2142) in 25S rRNA + S-adenosyl-L-methionine = N(1)-methyladenosine(2142) in 25S rRNA + S-adenosyl-L-homocysteine + H(+). Functionally, S-adenosyl-L-methionine-dependent methyltransferase that specifically methylates the N(1) position of adenine 2142 in 25S rRNA. N(1)-methyladenine(2142) in 25S rRNA is present in helix 65, a region that accounts for most of the intersubunit surface of the large subunit. In Saccharomyces cerevisiae (strain ATCC 204508 / S288c) (Baker's yeast), this protein is 25S rRNA (adenine(2142)-N(1))-methyltransferase.